Reading from the N-terminus, the 127-residue chain is UPF0102 protein Mmar10_3014 (127 aa).

This sequence belongs to the UPF0102 family.

The chain is UPF0102 protein Mmar10_3014 from Maricaulis maris (strain MCS10) (Caulobacter maris).